The chain runs to 296 residues: Tubulin polyglutamylase complex subunit 2 (296 aa).

Residues 254–265 (SKNKILIPKKKG) are compositionally biased toward basic residues. The interval 254–296 (SKNKILIPKKKGPVPPASGQKGPGPLPPPTSKPTTGSGNPVRK) is disordered. Positions 285–296 (KPTTGSGNPVRK) are enriched in low complexity.

As to quaternary structure, part of the neuronal tubulin polyglutamylase complex which contains TPGS1, TPGS2, TTLL1, LRRC49 and NICN1. Interacts with CSTPP1 and LRRC49.

The protein resides in the cytoplasm. It is found in the cytoskeleton. Its subcellular location is the microtubule organizing center. The protein localises to the centrosome. It localises to the centriolar satellite. Functionally, subunit of the tubulin polyglutamylase complex (TPGC). The complex mediates cilia and flagella polyglutamylation which is essential for their biogenesis and motility. The chain is Tubulin polyglutamylase complex subunit 2 (Tpgs2) from Mus musculus (Mouse).